We begin with the raw amino-acid sequence, 165 residues long: Lymphocyte antigen 6K (165 aa).

A signal peptide spans 1-17; that stretch reads MALLALLLVVALPRVWT. The N-linked (GlcNAc...) asparagine glycan is linked to N20. Residues 47–141 form the UPAR/Ly6 domain; sequence ERENTFECQN…VFKEYAGSMG (95 aa). G138 carries GPI-anchor amidated glycine lipidation. A propeptide spans 139–165 (removed in mature form); the sequence is SMGESCGGLWLAILLLLASIAAGLSLS.

In terms of assembly, interacts with TEX101. As to expression, specifically expressed in testis (at protein level).

It localises to the secreted. The protein resides in the cytoplasm. It is found in the cell membrane. The protein localises to the cytoplasmic vesicle. Its subcellular location is the secretory vesicle. It localises to the acrosome. The protein resides in the membrane raft. Required for sperm migration into the oviduct and male fertility by controlling binding of sperm to zona pellucida. May play a role in cell growth. This is Lymphocyte antigen 6K from Homo sapiens (Human).